Here is a 1057-residue protein sequence, read N- to C-terminus: Outer capsid protein VP2 (1057 aa).

Belongs to the orbivirus VP2 family.

The protein localises to the virion. In terms of biological role, the VP2 protein is one of the two proteins (with VP5) which constitute the virus particle outer capsid. It is the major target of the host immunogenic response. The chain is Outer capsid protein VP2 (Segment-2) from Anas (ducks).